Reading from the N-terminus, the 355-residue chain is uncharacterized protein (355 aa).

A helical transmembrane segment spans residues 6–26 (LLTPYFLLSILSVGVFTATAA).

The protein belongs to the SUN family.

The protein localises to the membrane. This is an uncharacterized protein from Saccharomyces cerevisiae (strain ATCC 204508 / S288c) (Baker's yeast).